We begin with the raw amino-acid sequence, 238 residues long: Single-stranded DNA-binding protein WHY2, mitochondrial (238 aa).

A mitochondrion-targeting transit peptide spans 1–29 (MMKQARSLLSRSLCDQSKSLFEASTLRGF). The required for ssDNA binding stretch occupies residues 62 to 67 (KGKAAL).

The protein belongs to the Whirly family. As to quaternary structure, homotetramer.

The protein resides in the mitochondrion. Single-stranded DNA-binding protein that associates with mitochondrial DNA and may play a role in the regulation of the gene expression machinery. Also seems to be required to prevent break-induced DNA rearrangements in the mitochondrial genome. Can bind to melt double-stranded DNA in vivo. The sequence is that of Single-stranded DNA-binding protein WHY2, mitochondrial (WHY2) from Arabidopsis thaliana (Mouse-ear cress).